Reading from the N-terminus, the 1182-residue chain is Lysine-specific demethylase hairless (1182 aa).

Disordered stretches follow at residues 227–257 (LGLA…GAGR), 302–380 (YQLG…KKTW), 411–443 (AGSP…ARAW), and 507–546 (TGHS…ASLN). Over residues 307-321 (PATPRCPSPGPPTPP) the composition is skewed to pro residues. The short motif at 561–565 (LCRLL) is the LXXLL motif 1 element. The C6-type zinc-finger motif lies at 595–620 (CSRCHHGLFNTHWRCSHCSHRLCVAC). The interval 697–746 (GDGGQQKEPTEKTPPTPQPSCNGDSNRTKDIKEETPDSTESPAEDGAGRS) is disordered. Over residues 722–731 (NRTKDIKEET) the composition is skewed to basic and acidic residues. The LXXLL motif 2 signature appears at 753-757 (LCELL). The JmjC domain maps to 939 to 1150 (DASRVQNLAS…LSAQLYHQGA (212 aa)). Positions 1000, 1002, and 1118 each coordinate Fe cation.

It depends on Fe(2+) as a cofactor. In terms of tissue distribution, expressed predominantly in brain, hair follicles and interfollicular epidermis. No expression in dermis.

It is found in the nucleus. The enzyme catalyses N(6),N(6)-dimethyl-L-lysyl(9)-[histone H3] + 2 2-oxoglutarate + 2 O2 = L-lysyl(9)-[histone H3] + 2 formaldehyde + 2 succinate + 2 CO2. Its function is as follows. Histone demethylase that specifically demethylates both mono- and dimethylated 'Lys-9' of histone H3. May act as a transcription regulator controlling hair biology (via targeting of collagens), neural activity, and cell cycle. The chain is Lysine-specific demethylase hairless (Hr) from Mus musculus (Mouse).